Consider the following 382-residue polypeptide: ATP phosphoribosyltransferase regulatory subunit (382 aa).

Belongs to the class-II aminoacyl-tRNA synthetase family. HisZ subfamily. Heteromultimer composed of HisG and HisZ subunits.

It is found in the cytoplasm. The protein operates within amino-acid biosynthesis; L-histidine biosynthesis; L-histidine from 5-phospho-alpha-D-ribose 1-diphosphate: step 1/9. Its function is as follows. Required for the first step of histidine biosynthesis. May allow the feedback regulation of ATP phosphoribosyltransferase activity by histidine. This Lacticaseibacillus paracasei (strain ATCC 334 / BCRC 17002 / CCUG 31169 / CIP 107868 / KCTC 3260 / NRRL B-441) (Lactobacillus paracasei) protein is ATP phosphoribosyltransferase regulatory subunit.